The chain runs to 361 residues: AT-hook motif nuclear-localized protein 12 (361 aa).

Disordered regions lie at residues 29-143 and 286-361; these read SQVA…GRKQ and NNKT…LTRG. A compositionally biased stretch (polar residues) spans 48 to 59; sequence SNPNIHHPQANN. The span at 85 to 95 shows a compositional bias: pro residues; it reads QPPPPPPPPEE. Residues 99–107 carry the Bipartite nuclear localization signal motif; sequence KRKRGRPRK. 2 consecutive DNA-binding regions (a.T hook) follow at residues 99-111 and 130-142; these read KRKR…YGEP and KRAR…TGRK. The PPC domain maps to 154–297; it reads TSAGLAFAPH…KTIRQEKEPN (144 aa). The segment covering 306 to 322 has biased composition (low complexity); it reads ETTPGSAAEPAASAGQQ.

Homodimer. Interacts with AHL27, AHL29 and ATAF2/NAC081.

The protein resides in the nucleus. In terms of biological role, transcription factor that specifically binds AT-rich DNA sequences related to the nuclear matrix attachment regions (MARs). This is AT-hook motif nuclear-localized protein 12 from Arabidopsis thaliana (Mouse-ear cress).